Here is a 412-residue protein sequence, read N- to C-terminus: Putative competence-damage inducible protein (412 aa).

This sequence belongs to the CinA family.

The chain is Putative competence-damage inducible protein from Bacillus cereus (strain B4264).